We begin with the raw amino-acid sequence, 820 residues long: Leucine--tRNA ligase (820 aa).

A 'HIGH' region motif is present at residues 40–51 (PYPSGAGLHVGH). A 'KMSKS' region motif is present at residues 601 to 605 (KMSKS). Lysine 604 is a binding site for ATP.

This sequence belongs to the class-I aminoacyl-tRNA synthetase family.

The protein resides in the cytoplasm. It catalyses the reaction tRNA(Leu) + L-leucine + ATP = L-leucyl-tRNA(Leu) + AMP + diphosphate. This is Leucine--tRNA ligase from Chlamydia felis (strain Fe/C-56) (Chlamydophila felis).